The following is a 657-amino-acid chain: Splicing factor Cactin (657 aa).

Positions 1 to 15 (MGKDSKKHKKERRRE) are enriched in basic residues. Disordered regions lie at residues 1 to 83 (MGKD…EDTL), 369 to 406 (QESE…ISKK), and 472 to 503 (ADVD…QGAS). Coiled coils occupy residues 23-77 (SDEE…RKDA) and 352-403 (RLQL…DEKI). The segment covering 26–60 (ERLQKRLAEQRSLKKDEKRRQKEEMKKNESAEEKR) has biased composition (basic and acidic residues). Residues 61-72 (ARRMEKKMRKDA) show a composition bias toward basic residues. Over residues 389-401 (EEEEEEEEDEDDE) the composition is skewed to acidic residues. The span at 489 to 503 (PSSSAASSGAPQGAS) shows a compositional bias: low complexity.

It belongs to the CACTIN family. In terms of tissue distribution, expressed in pharynx, intestine, vulva and spermatheca (at protein level).

The protein localises to the nucleus. It is found in the cytoplasm. Functionally, plays a role in pre-mRNA splicing by facilitating excision of a subset of introns. Plays a role during early embryonic development. Required for the distal tip cell migration at the end of larval development and for gonad morphogenesis. This is Splicing factor Cactin (cacn-1) from Caenorhabditis elegans.